We begin with the raw amino-acid sequence, 94 residues long: Large ribosomal subunit protein eL14 (94 aa).

The protein belongs to the eukaryotic ribosomal protein eL14 family.

The protein is Large ribosomal subunit protein eL14 of Methanopyrus kandleri (strain AV19 / DSM 6324 / JCM 9639 / NBRC 100938).